A 446-amino-acid chain; its full sequence is Adenylosuccinate synthetase (446 aa).

GTP contacts are provided by residues 20–26 and 48–50; these read GDEGKGK and GHT. Residue Asp-21 is the Proton acceptor of the active site. Residues Asp-21 and Gly-48 each contribute to the Mg(2+) site. IMP contacts are provided by residues 21-24, 46-49, Thr-137, Arg-151, Gln-232, Thr-247, and Arg-319; these read DEGK and NAGH. His-49 functions as the Proton donor in the catalytic mechanism. 315-321 contacts substrate; the sequence is SVTGRPR. Residues Arg-321, 347–349, and 429–431 each bind GTP; these read KLD and STG.

It belongs to the adenylosuccinate synthetase family. As to quaternary structure, homodimer. The cofactor is Mg(2+).

The protein localises to the cytoplasm. The enzyme catalyses IMP + L-aspartate + GTP = N(6)-(1,2-dicarboxyethyl)-AMP + GDP + phosphate + 2 H(+). It functions in the pathway purine metabolism; AMP biosynthesis via de novo pathway; AMP from IMP: step 1/2. Functionally, plays an important role in the de novo pathway of purine nucleotide biosynthesis. Catalyzes the first committed step in the biosynthesis of AMP from IMP. This Ralstonia pickettii (strain 12J) protein is Adenylosuccinate synthetase.